The chain runs to 523 residues: GMP synthase [glutamine-hydrolyzing] (523 aa).

Positions 8-205 (KILILDFGSQ…VVNICGCETK (198 aa)) constitute a Glutamine amidotransferase type-1 domain. Residue Cys85 is the Nucleophile of the active site. Catalysis depends on residues His179 and Glu181. The 193-residue stretch at 206–398 (WTAENIIEDA…LGLPAEMINR (193 aa)) folds into the GMPS ATP-PPase domain. 233–239 (SGGVDSS) is an ATP binding site.

Homodimer.

The enzyme catalyses XMP + L-glutamine + ATP + H2O = GMP + L-glutamate + AMP + diphosphate + 2 H(+). It participates in purine metabolism; GMP biosynthesis; GMP from XMP (L-Gln route): step 1/1. In terms of biological role, catalyzes the synthesis of GMP from XMP. This is GMP synthase [glutamine-hydrolyzing] from Haemophilus influenzae (strain PittEE).